The sequence spans 118 residues: HTH-type transcriptional regulator SarT (118 aa).

The segment at residues 55-78 (MRDIISYIGIDQSRIVKSVKELSK) is a DNA-binding region (H-T-H motif).

This sequence belongs to the SarA family.

Its subcellular location is the cytoplasm. In terms of biological role, transcriptional regulator acting as an intermediary between major regulators SarA and agr and virulence genes. Represses alpha-hemolysin (hla) gene expression. This is HTH-type transcriptional regulator SarT (sarT) from Staphylococcus aureus (strain Mu50 / ATCC 700699).